We begin with the raw amino-acid sequence, 258 residues long: Glutamate racemase (258 aa).

Substrate is bound by residues 11–12 (DS) and 43–44 (YG). C74 acts as the Proton donor/acceptor in catalysis. 75–76 (NT) lines the substrate pocket. Catalysis depends on C187, which acts as the Proton donor/acceptor. 188–189 (TH) contributes to the substrate binding site.

This sequence belongs to the aspartate/glutamate racemases family.

It catalyses the reaction L-glutamate = D-glutamate. The protein operates within cell wall biogenesis; peptidoglycan biosynthesis. Its function is as follows. Provides the (R)-glutamate required for cell wall biosynthesis. The polypeptide is Glutamate racemase (Bifidobacterium animalis subsp. lactis (strain AD011)).